Consider the following 275-residue polypeptide: Glutamate racemase (275 aa).

Substrate-binding positions include 12-13 (DS) and 44-45 (YG). Cysteine 75 functions as the Proton donor/acceptor in the catalytic mechanism. Position 76–77 (76–77 (NT)) interacts with substrate. The active-site Proton donor/acceptor is cysteine 185. 186-187 (TH) contributes to the substrate binding site.

It belongs to the aspartate/glutamate racemases family.

The enzyme catalyses L-glutamate = D-glutamate. The protein operates within cell wall biogenesis; peptidoglycan biosynthesis. Functionally, provides the (R)-glutamate required for cell wall biosynthesis. In Mycobacterium avium (strain 104), this protein is Glutamate racemase.